The chain runs to 204 residues: MILLQLSSAQGPEECCLAVRKALDRLIKEATRQDVAVTVLETETGRYSDTLRSALISLDGDNAWALSESWCGTIQWICPSPYRPHHGRKNWFLGIGRFTADEQEQSDAIRYETLRSSGPGGQHVNKTDSAVRATHLASGISVKVQSERSQHANKRLARLLIAWKLEQQQQENSAALKSQRRMFHHQIERGNPRRTFTGMAFIEG.

The tract at residues 2-98 (ILLQLSSAQG…KNWFLGIGRF (97 aa)) is rRNA-recognition domain, N-terminus. Residues 99-107 (TADEQEQSD) form a linker 1 region. The GGQ domain stretch occupies residues 108-161 (AIRYETLRSSGPGGQHVNKTDSAVRATHLASGISVKVQSERSQHANKRLARLLI). The short motif at 120 to 122 (GGQ) is the GGQ motif element. A linker 2 region spans residues 162–179 (AWKLEQQQQENSAALKSQ). Positions 180-204 (RRMFHHQIERGNPRRTFTGMAFIEG) are rRNA-recognition domain, C-terminus.

It belongs to the prokaryotic/mitochondrial release factor family. In terms of assembly, found in the A site of damaged 70S ribosomes, but not in undamaged ribosomes. Contacts (damaged) 16S rRNA, 23S rRNA and ribosomal protein uS12, but not mRNA.

Functionally, peptide chain release-like factor that acts on 70S ribosomes with specific damage to their decoding center (cleavage of 16S rRNA between adenine-1493 and guanosine-1494, E.coli 16S rRNA numbering). Probably acts as a peptidyl-tRNA hydrolase, allowing release of the nascent chain and dissociation of the 30S and 50S subunits. Can release mRNA as short as 19 nucleotides (nt, mRNA-19, which has a single amino acid in the P-site and only a single nt in the A-site) from the ribosome. This specific cleavage is inflicted by CdiA (ECL_04451) or by colicin E3-type (ColE3) proteins. In vivo the PrfH-RtcB2 pair restores growth in the presence of ribotoxins that specifically create this damage. The protein is Peptide chain release factor homolog of Escherichia coli (strain ATCC 25922 / DSM 1103 / LMG 8223 / NCIMB 12210 / NCTC 12241 / WDCM 00013 / Seattle 1946).